The sequence spans 365 residues: tRNA N6-adenosine threonylcarbamoyltransferase (365 aa).

Fe cation is bound by residues His-122 and His-126. Substrate is bound by residues 147 to 151 (LVSGG), Asp-180, Gly-193, and Asn-293. Asp-321 is a binding site for Fe cation. The segment at 340-365 (PNEIDTAARPRWPLSERTPATPEHVS) is disordered.

It belongs to the KAE1 / TsaD family. Fe(2+) serves as cofactor.

The protein resides in the cytoplasm. It carries out the reaction L-threonylcarbamoyladenylate + adenosine(37) in tRNA = N(6)-L-threonylcarbamoyladenosine(37) in tRNA + AMP + H(+). Functionally, required for the formation of a threonylcarbamoyl group on adenosine at position 37 (t(6)A37) in tRNAs that read codons beginning with adenine. Is involved in the transfer of the threonylcarbamoyl moiety of threonylcarbamoyl-AMP (TC-AMP) to the N6 group of A37, together with TsaE and TsaB. TsaD likely plays a direct catalytic role in this reaction. The chain is tRNA N6-adenosine threonylcarbamoyltransferase from Gluconobacter oxydans (strain 621H) (Gluconobacter suboxydans).